Reading from the N-terminus, the 397-residue chain is Probable transport protein MmpL6 (397 aa).

A run of 5 helical transmembrane segments spans residues 190-210 (YDLLIAGIAALSLILLIMMII), 214-234 (LVAALVIVGTVALSLGASFGL), 242-262 (LLGIQLYWIVLALAVILLLAV), 293-313 (TGGVVTAAGLVFAATMSSFVF), and 328-348 (LGLLFDTLVVRAFMTPSIAVL).

The protein belongs to the resistance-nodulation-cell division (RND) (TC 2.A.6) family. MmpL subfamily.

It is found in the cell membrane. This is Probable transport protein MmpL6 (mmpL6) from Mycobacterium tuberculosis (strain CDC 1551 / Oshkosh).